We begin with the raw amino-acid sequence, 138 residues long: Transcription antitermination protein NusB (138 aa).

It belongs to the NusB family.

Its function is as follows. Involved in transcription antitermination. Required for transcription of ribosomal RNA (rRNA) genes. Binds specifically to the boxA antiterminator sequence of the ribosomal RNA (rrn) operons. This Alkaliphilus oremlandii (strain OhILAs) (Clostridium oremlandii (strain OhILAs)) protein is Transcription antitermination protein NusB.